The sequence spans 212 residues: Thymidylate kinase (212 aa).

10–17 lines the ATP pocket; sequence GLEGAGKT.

This sequence belongs to the thymidylate kinase family.

It catalyses the reaction dTMP + ATP = dTDP + ADP. In terms of biological role, phosphorylation of dTMP to form dTDP in both de novo and salvage pathways of dTTP synthesis. The chain is Thymidylate kinase from Photorhabdus laumondii subsp. laumondii (strain DSM 15139 / CIP 105565 / TT01) (Photorhabdus luminescens subsp. laumondii).